The primary structure comprises 244 residues: Probable hydrolase R7 (244 aa).

An N-terminal signal peptide occupies residues 1-20 (MTKPFILLVPGSFAPETIYA). Catalysis depends on charge relay system residues aspartate 192 and histidine 224. N-linked (GlcNAc...) asparagine glycosylation occurs at asparagine 227.

The protein belongs to the AB hydrolase superfamily.

The protein operates within secondary metabolite biosynthesis. Functionally, probable hydrolase; part of the gene cluster that mediates the biosynthesis of squalestatin S1 (SQS1, also known as zaragozic acid A), a lead compound for the treatment of hyper-cholesterolemia by targeting squalene synthase (SS). Both phenylalanine and benzoic acid are known precursors of SQS1 and so it is unsurprising that the cluster also contains genes potentially involved in benzoate production such as phenyl-alanine ammonia lysase (PAL) M7, which catalyzes the first step in the degradation of phenylalanine, or the NADP-dependent dehydrogenase M3. The cluster contains two PKS encoding genes. The tetraketide synthase is responsible for the biosynthesis of the tetraketide sidechain of SQS1. The biosynthesis must involve 3 rounds of chain extension. After the first and second rounds methyl-transfer occurs, and in all rounds of extension the ketoreductase and dehydratase areactive. The enoyl reductase and C-MeT are not active in the final round of extension. The other PKS is therefore likely to encode squalestatin hexaketide synthase (SQHKS). The hexaketide main chain is initiated by benzoate which is an unusual starter unit for a highly reducing polyketide synthase. The cluster also contains a gene encoding a citrate synthase-like protein R3 presumably involved in linking the hexaketide to the oxaloacetate moiety. Formation of the tetraketide CoA may be catalyzed by the M9 CoA ligase, but the mechanism of release of the tetraketide and the hexaketide from their respective PKS remains unknown, although the cluster encodes a potential esterase (M8) and a possible hydrolase (M10) which could be involved in these processes. Two acyltransferases (AT), M4 and R4, are also encoded in the cluster. M4 is responsible for loading of the tetraketide sidechain from CoA onto the squalestatin core as the final step of biosynthesis. M4 appears to have a broad substrate selectivity for its acyl CoA substrate, allowing the in vitro synthesis of novel squalestatins. The biosynthesis of SQS1 requires several oxidative steps likely performed by oxidoreductases M1, R1 and R2. Finally, in support of the identification of the cluster as being responsible for SQS1 production, the cluster contains a gene encoding a putative squalene synthase (SS) R6, suggesting a likely mechanism for self-resistance. The polypeptide is Probable hydrolase R7 (Phoma sp. (strain ATCC 20986 / MF5453)).